We begin with the raw amino-acid sequence, 141 residues long: MSTDDSPYKQAFSLFDRHGTGRIPKTSIGDLLRACGQNPTLAEITEIESTLPAEVDMEQFLQVLNRPNGFDMPGDPEEFVKGFQVFDKDATGMIGVGELRYVLTSLGEKLSNEEMDELLKGVPVKDGMVNYHDFVQMILAN.

S2 and S6 each carry phosphoserine. EF-hand domains are found at residues 3 to 38 (TDDS…CGQN), 74 to 109 (GDPE…LGEK), and 109 to 141 (KLSN…ILAN). Residues D87, D89, T91, M93, and E98 each contribute to the Ca(2+) site.

As to quaternary structure, binds to myosin II chains myo2 and myo3. Interacts with vps27 and a PI 4-kinase pik1. Phosphorylated on either Ser-2 or Ser-6 but not both. Phosphorylation is not essential for the function of the protein.

It is found in the cytoplasm. In terms of biological role, involved in cytokinesis. Required for the formation and function of the contractile ring. In Schizosaccharomyces pombe (strain 972 / ATCC 24843) (Fission yeast), this protein is Myosin regulatory light chain cdc4 (cdc4).